A 150-amino-acid chain; its full sequence is 3-dehydroquinate dehydratase (150 aa).

Y26 functions as the Proton acceptor in the catalytic mechanism. Positions 77, 83, and 90 each coordinate substrate. H103 serves as the catalytic Proton donor. Substrate contacts are provided by residues 104–105 (LS) and R114.

It belongs to the type-II 3-dehydroquinase family. In terms of assembly, homododecamer.

It carries out the reaction 3-dehydroquinate = 3-dehydroshikimate + H2O. It functions in the pathway metabolic intermediate biosynthesis; chorismate biosynthesis; chorismate from D-erythrose 4-phosphate and phosphoenolpyruvate: step 3/7. Catalyzes a trans-dehydration via an enolate intermediate. This chain is 3-dehydroquinate dehydratase, found in Pectobacterium carotovorum subsp. carotovorum (strain PC1).